A 1032-amino-acid chain; its full sequence is Caspase recruitment domain-containing protein 10 (1032 aa).

Disordered regions lie at residues 1–23 (MPGR…SEAE), 253–276 (RARG…EPDN), and 481–553 (EFPS…MSDI). Ser-18 is modified (phosphoserine). A CARD domain is found at 23–115 (EEDALWERIE…EHFTLLTGQE (93 aa)). Positions 138–456 (TEVRRLREAR…LEVQLQRAQG (319 aa)) form a coiled coil. 2 stretches are compositionally biased toward basic and acidic residues: residues 261-276 (AEEK…EPDN) and 504-517 (HNSE…KEIN).

As to quaternary structure, CARD10 and BCL10 bind to each other by CARD-CARD interaction. They both participate in a complex with MALT1, where MALT1 binds to BCL10. Interacts with TMEM43; this interaction is essential for EGFR-mediated NF-kappa-B activation. Detected in adult heart, kidney and liver; lower levels in intestine, placenta, muscle and lung. Also found in fetal lung, liver and kidney.

The protein resides in the cytoplasm. Its function is as follows. Scaffold protein that plays an important role in mediating the activation of NF-kappa-B via BCL10 or EGFR. The polypeptide is Caspase recruitment domain-containing protein 10 (CARD10) (Homo sapiens (Human)).